A 407-amino-acid polypeptide reads, in one-letter code: 3-oxoacyl-[acyl-carrier-protein] synthase 1 (407 aa).

Residues 1–406 form the Ketosynthase family 3 (KS3) domain; that stretch reads MKRVVITGFG…GTNVSLILKK (406 aa). Active-site for beta-ketoacyl synthase activity residues include Cys164, His300, and His336.

This sequence belongs to the thiolase-like superfamily. Beta-ketoacyl-ACP synthases family. As to quaternary structure, homodimer.

Its subcellular location is the cytoplasm. The enzyme catalyses a fatty acyl-[ACP] + malonyl-[ACP] + H(+) = a 3-oxoacyl-[ACP] + holo-[ACP] + CO2. It carries out the reaction (3Z)-decenoyl-[ACP] + malonyl-[ACP] + H(+) = 3-oxo-(5Z)-dodecenoyl-[ACP] + holo-[ACP] + CO2. It participates in lipid metabolism; fatty acid biosynthesis. Involved in the type II fatty acid elongation cycle. Catalyzes the elongation of a wide range of acyl-ACP by the addition of two carbons from malonyl-ACP to an acyl acceptor. Can also use unsaturated fatty acids. Catalyzes a key reaction in unsaturated fatty acid (UFA) synthesis, the elongation of the cis-3-decenoyl-ACP produced by FabA. The sequence is that of 3-oxoacyl-[acyl-carrier-protein] synthase 1 (fabB) from Buchnera aphidicola subsp. Schizaphis graminum (strain Sg).